The chain runs to 86 residues: Large ribosomal subunit protein uL23 (86 aa).

The protein belongs to the universal ribosomal protein uL23 family. As to quaternary structure, part of the 50S ribosomal subunit. Contacts protein L29.

Functionally, binds to 23S rRNA. One of the proteins that surrounds the polypeptide exit tunnel on the outside of the ribosome. The polypeptide is Large ribosomal subunit protein uL23 (Methanococcus vannielii (strain ATCC 35089 / DSM 1224 / JCM 13029 / OCM 148 / SB)).